Reading from the N-terminus, the 427-residue chain is Peptidase B (427 aa).

2 residues coordinate Mn(2+): lysine 195 and aspartate 200. The active site involves lysine 207. Aspartate 218, aspartate 277, and glutamate 279 together coordinate Mn(2+). The active site involves arginine 281.

This sequence belongs to the peptidase M17 family. In terms of assembly, homohexamer. Requires Mn(2+) as cofactor.

It is found in the cytoplasm. It catalyses the reaction Release of an N-terminal amino acid, Xaa, from a peptide or arylamide. Xaa is preferably Glu or Asp but may be other amino acids, including Leu, Met, His, Cys and Gln.. Its function is as follows. Probably plays an important role in intracellular peptide degradation. In Escherichia fergusonii (strain ATCC 35469 / DSM 13698 / CCUG 18766 / IAM 14443 / JCM 21226 / LMG 7866 / NBRC 102419 / NCTC 12128 / CDC 0568-73), this protein is Peptidase B.